The chain runs to 129 residues: Protein HMF1 (129 aa).

Lysine 52 is covalently cross-linked (Glycyl lysine isopeptide (Lys-Gly) (interchain with G-Cter in ubiquitin)).

It belongs to the RutC family.

It localises to the cytoplasm. The protein localises to the nucleus. The protein resides in the mitochondrion intermembrane space. The polypeptide is Protein HMF1 (HMF1) (Saccharomyces cerevisiae (strain ATCC 204508 / S288c) (Baker's yeast)).